The following is a 273-amino-acid chain: HUWE1-associated protein modifying stress responses 2 (273 aa).

Disordered stretches follow at residues 146–181 (GKVP…SSSV), 204–230 (ISMR…FLED), and 251–273 (KRTS…NRMV). Residues 149-165 (PPAPPPPRTPRTPPKPP) are compositionally biased toward pro residues. Polar residues-rich tracts occupy residues 170–181 (SQAVATESSSSV), 208–218 (SGDSPQDSGVA), and 254–267 (SAQC…SPIQ). A nuclear localization signal region spans residues 249–273 (IRKRTSAQCSDGITDSPIQKRNRMV).

The protein belongs to the HAPSTR1 family. In terms of assembly, homooligomer. Heterooligomer with HAPSTR1; the interaction is direct and stabilizes HAPSTR1 independently of HUWE1. Interacts with HUWE1. In terms of tissue distribution, expressed in a tissue-restricted manner compared to HAPSTR1.

The protein resides in the nucleus. Functionally, together with HAPSTR1 plays a central regulatory role in the cellular response to molecular stressors, such as DNA damage, nutrient scarcity, and protein misfolding. Regulates these multiple stress response signaling pathways by stabilizing HAPSTR1, but also independently of HAPSTR1. This chain is HUWE1-associated protein modifying stress responses 2, found in Homo sapiens (Human).